A 443-amino-acid polypeptide reads, in one-letter code: Light-independent protochlorophyllide reductase subunit N (443 aa).

[4Fe-4S] cluster-binding residues include cysteine 15, cysteine 40, and cysteine 99.

The protein belongs to the BchN/ChlN family. Protochlorophyllide reductase is composed of three subunits; BchL, BchN and BchB. Forms a heterotetramer of two BchB and two BchN subunits. [4Fe-4S] cluster serves as cofactor.

The catalysed reaction is chlorophyllide a + oxidized 2[4Fe-4S]-[ferredoxin] + 2 ADP + 2 phosphate = protochlorophyllide a + reduced 2[4Fe-4S]-[ferredoxin] + 2 ATP + 2 H2O. It functions in the pathway porphyrin-containing compound metabolism; bacteriochlorophyll biosynthesis (light-independent). Component of the dark-operative protochlorophyllide reductase (DPOR) that uses Mg-ATP and reduced ferredoxin to reduce ring D of protochlorophyllide (Pchlide) to form chlorophyllide a (Chlide). This reaction is light-independent. The NB-protein (BchN-BchB) is the catalytic component of the complex. The protein is Light-independent protochlorophyllide reductase subunit N of Heliobacterium modesticaldum (strain ATCC 51547 / Ice1).